The chain runs to 71 residues: MTLLIILILKYLLCLENLKNISLQISKNNTINNINCENNFNNINKSYSINESNSAKNDFVKFLKFIFFHAF.

The signal sequence occupies residues 1 to 23 (MTLLIILILKYLLCLENLKNISL). N-linked (GlcNAc...) asparagine glycosylation is found at Asn-20, Asn-28, Asn-44, and Asn-50.

Its subcellular location is the secreted. This is an uncharacterized protein from Dictyostelium discoideum (Social amoeba).